The following is a 264-amino-acid chain: S-adenosylmethionine decarboxylase proenzyme (264 aa).

S112 acts as the Schiff-base intermediate with substrate; via pyruvic acid in catalysis. S112 carries the post-translational modification Pyruvic acid (Ser); by autocatalysis. Catalysis depends on H117, which acts as the Proton acceptor; for processing activity. C140 functions as the Proton donor; for catalytic activity in the catalytic mechanism.

This sequence belongs to the prokaryotic AdoMetDC family. Type 2 subfamily. Heterooctamer of four alpha and four beta chains arranged as a tetramer of alpha/beta heterodimers. It depends on pyruvate as a cofactor. Post-translationally, is synthesized initially as an inactive proenzyme. Formation of the active enzyme involves a self-maturation process in which the active site pyruvoyl group is generated from an internal serine residue via an autocatalytic post-translational modification. Two non-identical subunits are generated from the proenzyme in this reaction, and the pyruvate is formed at the N-terminus of the alpha chain, which is derived from the carboxyl end of the proenzyme. The post-translation cleavage follows an unusual pathway, termed non-hydrolytic serinolysis, in which the side chain hydroxyl group of the serine supplies its oxygen atom to form the C-terminus of the beta chain, while the remainder of the serine residue undergoes an oxidative deamination to produce ammonia and the pyruvoyl group blocking the N-terminus of the alpha chain.

It catalyses the reaction S-adenosyl-L-methionine + H(+) = S-adenosyl 3-(methylsulfanyl)propylamine + CO2. Its pathway is amine and polyamine biosynthesis; S-adenosylmethioninamine biosynthesis; S-adenosylmethioninamine from S-adenosyl-L-methionine: step 1/1. Catalyzes the decarboxylation of S-adenosylmethionine to S-adenosylmethioninamine (dcAdoMet), the propylamine donor required for the synthesis of the polyamines spermine and spermidine from the diamine putrescine. This chain is S-adenosylmethionine decarboxylase proenzyme, found in Salmonella typhi.